We begin with the raw amino-acid sequence, 993 residues long: UPF0182 protein MAP_3291c (993 aa).

Helical transmembrane passes span 18–38, 63–83, 113–133, 175–195, 210–230, 254–274, and 287–307; these read ILIL…RLID, FVVF…GLAV, LVSV…AQSY, FVAV…FGGI, IQLV…YWLD, AVLP…AAVF, and IGLV…PLIV. The tract at residues 903 to 941 is disordered; it reads NIQPTEGGAPAASPPANAPAPAVTPGSAPPVAAPPVPDG. The span at 929 to 939 shows a compositional bias: pro residues; the sequence is SAPPVAAPPVP.

This sequence belongs to the UPF0182 family.

The protein localises to the cell membrane. This chain is UPF0182 protein MAP_3291c, found in Mycolicibacterium paratuberculosis (strain ATCC BAA-968 / K-10) (Mycobacterium paratuberculosis).